We begin with the raw amino-acid sequence, 260 residues long: Chloride intracellular channel Clic (260 aa).

The chain crosses the membrane as a helical span at residues 42 to 66 (FCQEYFMDLYLLAELKTISLKVTTV).

Belongs to the chloride channel CLIC family. Expressed in cardiac tubes.

It is found in the mitochondrion. The protein resides in the membrane. Might insert into membranes and form chloride ion channels. Channel activity depends on the pH. May play a role in ethanol sensitivity. The protein is Chloride intracellular channel Clic of Drosophila melanogaster (Fruit fly).